The primary structure comprises 338 residues: Ketol-acid reductoisomerase (NADP(+)) (338 aa).

One can recognise a KARI N-terminal Rossmann domain in the interval 1-181 (MKVFYDKDCD…GGGRTGIIET (181 aa)). Residues 24–27 (YGSQ), arginine 47, serine 50, threonine 52, and 82–85 (DEFQ) each bind NADP(+). The active site involves histidine 107. Residue glycine 133 coordinates NADP(+). Residues 182–327 (TFKDETETDL…EQLRSMMPWI (146 aa)) enclose the KARI C-terminal knotted domain. Mg(2+) contacts are provided by aspartate 190, glutamate 194, glutamate 226, and glutamate 230. Serine 251 is a binding site for substrate.

It belongs to the ketol-acid reductoisomerase family. Requires Mg(2+) as cofactor.

It catalyses the reaction (2R)-2,3-dihydroxy-3-methylbutanoate + NADP(+) = (2S)-2-acetolactate + NADPH + H(+). It carries out the reaction (2R,3R)-2,3-dihydroxy-3-methylpentanoate + NADP(+) = (S)-2-ethyl-2-hydroxy-3-oxobutanoate + NADPH + H(+). Its pathway is amino-acid biosynthesis; L-isoleucine biosynthesis; L-isoleucine from 2-oxobutanoate: step 2/4. It participates in amino-acid biosynthesis; L-valine biosynthesis; L-valine from pyruvate: step 2/4. Functionally, involved in the biosynthesis of branched-chain amino acids (BCAA). Catalyzes an alkyl-migration followed by a ketol-acid reduction of (S)-2-acetolactate (S2AL) to yield (R)-2,3-dihydroxy-isovalerate. In the isomerase reaction, S2AL is rearranged via a Mg-dependent methyl migration to produce 3-hydroxy-3-methyl-2-ketobutyrate (HMKB). In the reductase reaction, this 2-ketoacid undergoes a metal-dependent reduction by NADPH to yield (R)-2,3-dihydroxy-isovalerate. This Pseudomonas entomophila (strain L48) protein is Ketol-acid reductoisomerase (NADP(+)).